Consider the following 565-residue polypeptide: Laccase-12 (565 aa).

A signal peptide spans 1-24 (MTTVHTFSILLFFCSLFSASLIIA). 2 consecutive Plastocyanin-like domains span residues 32–148 (VIQE…PTPG) and 158–310 (RQTA…YKKT). Residue N78 is glycosylated (N-linked (GlcNAc...) asparagine). Residues H82, H84, H127, and H129 each coordinate Cu cation. N187, N203, N298, N325, N377, N387, N395, and N428 each carry an N-linked (GlcNAc...) asparagine glycan. In terms of domain architecture, Plastocyanin-like 3 spans 413–549 (DFPSKPPVKF…AMAFLVDNGV (137 aa)). Cu cation is bound by residues H466, H469, H471, H528, C529, H530, and H534.

It belongs to the multicopper oxidase family. Cu cation is required as a cofactor. In terms of tissue distribution, predominantly expressed in the inflorescence stem.

It is found in the secreted. It localises to the extracellular space. Its subcellular location is the apoplast. It carries out the reaction 4 hydroquinone + O2 = 4 benzosemiquinone + 2 H2O. In terms of biological role, lignin degradation and detoxification of lignin-derived products. This is Laccase-12 (LAC12) from Arabidopsis thaliana (Mouse-ear cress).